We begin with the raw amino-acid sequence, 313 residues long: Ribosomal RNA small subunit methyltransferase H (313 aa).

Residues 35–37 (GGH), D55, F79, D101, and Q108 contribute to the S-adenosyl-L-methionine site.

It belongs to the methyltransferase superfamily. RsmH family.

The protein resides in the cytoplasm. The enzyme catalyses cytidine(1402) in 16S rRNA + S-adenosyl-L-methionine = N(4)-methylcytidine(1402) in 16S rRNA + S-adenosyl-L-homocysteine + H(+). Functionally, specifically methylates the N4 position of cytidine in position 1402 (C1402) of 16S rRNA. The protein is Ribosomal RNA small subunit methyltransferase H of Salmonella paratyphi A (strain ATCC 9150 / SARB42).